A 370-amino-acid polypeptide reads, in one-letter code: Histidinol-phosphate aminotransferase (370 aa).

The residue at position 223 (K223) is an N6-(pyridoxal phosphate)lysine.

The protein belongs to the class-II pyridoxal-phosphate-dependent aminotransferase family. Histidinol-phosphate aminotransferase subfamily. As to quaternary structure, homodimer. Requires pyridoxal 5'-phosphate as cofactor.

The enzyme catalyses L-histidinol phosphate + 2-oxoglutarate = 3-(imidazol-4-yl)-2-oxopropyl phosphate + L-glutamate. The protein operates within amino-acid biosynthesis; L-histidine biosynthesis; L-histidine from 5-phospho-alpha-D-ribose 1-diphosphate: step 7/9. The protein is Histidinol-phosphate aminotransferase of Methylobacterium sp. (strain 4-46).